Consider the following 255-residue polypeptide: uncharacterized protein (255 aa).

It belongs to the methyltransferase superfamily.

This is an uncharacterized protein from Mycobacterium marinum (strain ATCC BAA-535 / M).